The primary structure comprises 414 residues: Multifunctional CCA protein (414 aa).

Positions 8 and 11 each coordinate ATP. Residues glycine 8 and arginine 11 each coordinate CTP. Mg(2+) is bound by residues aspartate 21 and aspartate 23. Residues arginine 91, arginine 143, and arginine 146 each contribute to the ATP site. 3 residues coordinate CTP: arginine 91, arginine 143, and arginine 146. One can recognise an HD domain in the interval 232 to 333 (TGVHVMMVID…TRLVERCDAL (102 aa)).

Belongs to the tRNA nucleotidyltransferase/poly(A) polymerase family. Bacterial CCA-adding enzyme type 1 subfamily. As to quaternary structure, monomer. Can also form homodimers and oligomers. The cofactor is Mg(2+). It depends on Ni(2+) as a cofactor.

The catalysed reaction is a tRNA precursor + 2 CTP + ATP = a tRNA with a 3' CCA end + 3 diphosphate. It catalyses the reaction a tRNA with a 3' CCA end + 2 CTP + ATP = a tRNA with a 3' CCACCA end + 3 diphosphate. In terms of biological role, catalyzes the addition and repair of the essential 3'-terminal CCA sequence in tRNAs without using a nucleic acid template. Adds these three nucleotides in the order of C, C, and A to the tRNA nucleotide-73, using CTP and ATP as substrates and producing inorganic pyrophosphate. tRNA 3'-terminal CCA addition is required both for tRNA processing and repair. Also involved in tRNA surveillance by mediating tandem CCA addition to generate a CCACCA at the 3' terminus of unstable tRNAs. While stable tRNAs receive only 3'-terminal CCA, unstable tRNAs are marked with CCACCA and rapidly degraded. The sequence is that of Multifunctional CCA protein from Cupriavidus metallidurans (strain ATCC 43123 / DSM 2839 / NBRC 102507 / CH34) (Ralstonia metallidurans).